The sequence spans 598 residues: NADH-quinone oxidoreductase subunit C/D (598 aa).

Residues M1–E189 are NADH dehydrogenase I subunit C. An NADH dehydrogenase I subunit D region spans residues D213–R598.

It in the N-terminal section; belongs to the complex I 30 kDa subunit family. In the C-terminal section; belongs to the complex I 49 kDa subunit family. As to quaternary structure, NDH-1 is composed of 13 different subunits. Subunits NuoB, CD, E, F, and G constitute the peripheral sector of the complex.

Its subcellular location is the cell inner membrane. The catalysed reaction is a quinone + NADH + 5 H(+)(in) = a quinol + NAD(+) + 4 H(+)(out). Its function is as follows. NDH-1 shuttles electrons from NADH, via FMN and iron-sulfur (Fe-S) centers, to quinones in the respiratory chain. The immediate electron acceptor for the enzyme in this species is believed to be ubiquinone. Couples the redox reaction to proton translocation (for every two electrons transferred, four hydrogen ions are translocated across the cytoplasmic membrane), and thus conserves the redox energy in a proton gradient. The polypeptide is NADH-quinone oxidoreductase subunit C/D (Proteus mirabilis (strain HI4320)).